We begin with the raw amino-acid sequence, 287 residues long: Shikimate dehydrogenase (NADP(+)) (287 aa).

Shikimate-binding positions include 21-23 (SKS) and threonine 68. Lysine 72 acts as the Proton acceptor in catalysis. 2 residues coordinate shikimate: asparagine 93 and aspartate 109. NADP(+) contacts are provided by residues 133–137 (GAGGA), 157–162 (NRTQTK), and methionine 226. Tyrosine 228 serves as a coordination point for shikimate. Residue glycine 250 participates in NADP(+) binding.

This sequence belongs to the shikimate dehydrogenase family. As to quaternary structure, homodimer.

It catalyses the reaction shikimate + NADP(+) = 3-dehydroshikimate + NADPH + H(+). It functions in the pathway metabolic intermediate biosynthesis; chorismate biosynthesis; chorismate from D-erythrose 4-phosphate and phosphoenolpyruvate: step 4/7. In terms of biological role, involved in the biosynthesis of the chorismate, which leads to the biosynthesis of aromatic amino acids. Catalyzes the reversible NADPH linked reduction of 3-dehydroshikimate (DHSA) to yield shikimate (SA). In Shewanella oneidensis (strain ATCC 700550 / JCM 31522 / CIP 106686 / LMG 19005 / NCIMB 14063 / MR-1), this protein is Shikimate dehydrogenase (NADP(+)).